The following is a 569-amino-acid chain: Urease subunit alpha (569 aa).

The Urease domain maps to 131–569; sequence GGIDSHIHFI…LPLAQRYFLF (439 aa). Positions 136, 138, and 219 each coordinate Ni(2+). Lys-219 carries the N6-carboxylysine modification. A substrate-binding site is contributed by His-221. His-248 and His-274 together coordinate Ni(2+). His-322 serves as the catalytic Proton donor. Residue Asp-362 participates in Ni(2+) binding.

This sequence belongs to the metallo-dependent hydrolases superfamily. Urease alpha subunit family. In terms of assembly, heterotrimer of UreA (gamma), UreB (beta) and UreC (alpha) subunits. Three heterotrimers associate to form the active enzyme. Requires Ni cation as cofactor. In terms of processing, carboxylation allows a single lysine to coordinate two nickel ions.

It is found in the cytoplasm. It carries out the reaction urea + 2 H2O + H(+) = hydrogencarbonate + 2 NH4(+). It participates in nitrogen metabolism; urea degradation; CO(2) and NH(3) from urea (urease route): step 1/1. This Herpetosiphon aurantiacus (strain ATCC 23779 / DSM 785 / 114-95) protein is Urease subunit alpha.